A 325-amino-acid polypeptide reads, in one-letter code: Malate dehydrogenase (325 aa).

NAD(+) is bound by residues 10 to 15 (GAGNVG) and Asp34. Substrate-binding residues include Arg88 and Arg94. NAD(+)-binding positions include Asn101 and 124–126 (VSN). Residues Asn126 and Arg157 each contribute to the substrate site. His181 functions as the Proton acceptor in the catalytic mechanism.

Belongs to the LDH/MDH superfamily.

The catalysed reaction is (S)-malate + NAD(+) = oxaloacetate + NADH + H(+). Catalyzes the reversible oxidation of malate to oxaloacetate. The protein is Malate dehydrogenase (mdh) of Thermoplasma volcanium (strain ATCC 51530 / DSM 4299 / JCM 9571 / NBRC 15438 / GSS1).